The chain runs to 396 residues: Tryptophan synthase beta chain (396 aa).

Lys88 carries the post-translational modification N6-(pyridoxal phosphate)lysine.

It belongs to the TrpB family. In terms of assembly, tetramer of two alpha and two beta chains. Requires pyridoxal 5'-phosphate as cofactor.

The catalysed reaction is (1S,2R)-1-C-(indol-3-yl)glycerol 3-phosphate + L-serine = D-glyceraldehyde 3-phosphate + L-tryptophan + H2O. Its pathway is amino-acid biosynthesis; L-tryptophan biosynthesis; L-tryptophan from chorismate: step 5/5. The beta subunit is responsible for the synthesis of L-tryptophan from indole and L-serine. In Shewanella putrefaciens (strain CN-32 / ATCC BAA-453), this protein is Tryptophan synthase beta chain.